Here is a 196-residue protein sequence, read N- to C-terminus: DnaA initiator-associating protein DiaA (196 aa).

An SIS domain is found at 34–196 (LVHSLLNGNK…DNTLFPHQDD (163 aa)).

Belongs to the SIS family. DiaA subfamily. Homotetramer; dimer of dimers.

Functionally, required for the timely initiation of chromosomal replication via direct interactions with the DnaA initiator protein. The protein is DnaA initiator-associating protein DiaA of Citrobacter koseri (strain ATCC BAA-895 / CDC 4225-83 / SGSC4696).